Here is a 149-residue protein sequence, read N- to C-terminus: Ribonuclease H (149 aa).

An RNase H type-1 domain is found at 1–143 (MNQVVIYTDG…ADALANKGVD (143 aa)). 4 residues coordinate Mg(2+): Asp9, Glu47, Asp69, and Asp135.

It belongs to the RNase H family. Monomer. Requires Mg(2+) as cofactor.

Its subcellular location is the cytoplasm. It carries out the reaction Endonucleolytic cleavage to 5'-phosphomonoester.. Its function is as follows. Endonuclease that specifically degrades the RNA of RNA-DNA hybrids. The protein is Ribonuclease H of Paracidovorax citrulli (strain AAC00-1) (Acidovorax citrulli).